Here is a 101-residue protein sequence, read N- to C-terminus: MVDISRELQVALNTGKVIIGFEETKKAVLAGTPKLVILAANAPKWARGDIEYYAKLAGVPVFIFPGSSIELGAAAKRPHKIMALAVLDPGQSEILKVVEHV.

Belongs to the eukaryotic ribosomal protein eL30 family.

This chain is Large ribosomal subunit protein eL30, found in Pyrobaculum neutrophilum (strain DSM 2338 / JCM 9278 / NBRC 100436 / V24Sta) (Thermoproteus neutrophilus).